Here is a 3459-residue protein sequence, read N- to C-terminus: uncharacterized protein (3459 aa).

A compositionally biased stretch (acidic residues) spans 158–167; that stretch reads NDDDWIFNED. Disordered regions lie at residues 158–230 and 400–447; these read NDDD…NNNN and YGYI…NDEK. Residues 168–184 show a composition bias toward basic and acidic residues; that stretch reads DEKKNKNNDGNDNRYDY. Positions 185–201 are enriched in low complexity; that stretch reads NDLQNNNNNDNNKYDYN. Over residues 204–221 the composition is skewed to basic and acidic residues; the sequence is DDEKKNKNNDGDDNKYDY. Acidic residues predominate over residues 406–443; it reads DNDDGDDYNDDNDNDDNYNDDNYNDDNYNDDNYNDDNY. Positions 771-851 form a coiled coil; sequence VNEKKKGENE…NEMNKDEENE (81 aa). Residues 1059-1079 traverse the membrane as a helical segment; sequence LIYMIYLFFTYKKYDLLLMFI. 3 disordered regions span residues 1148–1187, 1399–1467, and 1711–1733; these read RRQEKVLNNKDNNDKNDKNDKNDKNDKNDKNEKNEKNDYD, IPTQ…NDDD, and QKKKGNNQKQNHNYNDDINNKEN. A compositionally biased stretch (basic and acidic residues) spans 1404–1463; that stretch reads DKNETDEGNKNETDEGDKNETDEGDKNETDEGNKNETEEIYKNETDEGNKNETEEIYKND. A run of 2 helical transmembrane segments spans residues 2059–2079 and 2197–2217; these read FLLFQMSLSNCFYIMNNIFFF and IIQCTTYMFLLFFIFSTDFLF. Disordered stretches follow at residues 2582–2644 and 2776–2835; these read IYKD…DNNN and GRIW…DKGD. Over residues 2592 to 2629 the composition is skewed to acidic residues; it reads DNNDDDNINDDDNINDDDNINDDDNNNDDDNNNDDNND. Positions 2779–2821 are enriched in basic and acidic residues; the sequence is WKREENGEKKKNEKNESEKNERNEKNEKNEKHEKHEKHEKNEK. The stretch at 2785-2820 forms a coiled coil; it reads GEKKKNEKNESEKNERNEKNEKNEKHEKHEKHEKNE. Transmembrane regions (helical) follow at residues 3229–3249 and 3296–3316; these read LFIIKEYNNIFLYIYMLSFIL and LLFFFNYIFEQIILFVININS.

The protein resides in the membrane. This is an uncharacterized protein from Plasmodium falciparum (isolate 3D7).